The chain runs to 620 residues: Glutathione-regulated potassium-efflux system protein KefC (620 aa).

The next 12 helical transmembrane spans lie at 4-24, 26-46, 54-74, 90-110, 114-134, 149-169, 178-198, 218-238, 270-290, 294-314, 327-347, and 359-379; these read HTLIQALIYLGSAALIVPIAV, LGLGSVLGYLIAGCIIGPWGL, SILHFAEIGVVLMLFIIGLEL, GALQMVICGGLLGLFCMLLGL, VAELIGMTLALSSTAIAMQAM, FAVLLFQDIAAIPLVAMIPLL, MGAFALSALKVAGALVLVVLL, VFSAVALFLVFGFGLLLEEVG, GLLLGLFFIGVGMSIDFGTLL, LRIVILLLGFLIIKIAMLWLI, WFAVLLGQGSEFAFVVFGAAQ, and SLTLAVALSMAATPILLVILN. The region spanning 399–518 is the RCK N-terminal domain; it reads QPRVIIAGFG…AGVEKPERET (120 aa). Positions 597–620 are disordered; the sequence is GWQGTEEGKHTGNMADEPETKPSS.

It belongs to the monovalent cation:proton antiporter 2 (CPA2) transporter (TC 2.A.37) family. KefC subfamily. As to quaternary structure, homodimer. Interacts with the regulatory subunit KefF.

It is found in the cell inner membrane. Pore-forming subunit of a potassium efflux system that confers protection against electrophiles. Catalyzes K(+)/H(+) antiport. This is Glutathione-regulated potassium-efflux system protein KefC from Escherichia coli (strain K12 / MC4100 / BW2952).